The sequence spans 410 residues: Acetate kinase (410 aa).

Asparagine 7 contacts Mg(2+). Residue lysine 14 participates in ATP binding. Position 88 (arginine 88) interacts with substrate. The active-site Proton donor/acceptor is aspartate 145. Residues 203-207 (HAGNG), 278-280 (DTR), and 326-330 (GIGEN) contribute to the ATP site. Position 379 (glutamate 379) interacts with Mg(2+).

Belongs to the acetokinase family. As to quaternary structure, homodimer. Mg(2+) is required as a cofactor. Mn(2+) serves as cofactor.

It localises to the cytoplasm. It catalyses the reaction acetate + ATP = acetyl phosphate + ADP. Its pathway is metabolic intermediate biosynthesis; acetyl-CoA biosynthesis; acetyl-CoA from acetate: step 1/2. Its function is as follows. Catalyzes the formation of acetyl phosphate from acetate and ATP. Can also catalyze the reverse reaction. This chain is Acetate kinase, found in Aster yellows witches'-broom phytoplasma (strain AYWB).